Reading from the N-terminus, the 274-residue chain is MNPEHSPLGKATVYAAQYDASLLFPIPRAGAREQLGIAAALPFFGTDIWNAYELSWLNARGKPQLAVATFYVPAESPNIVESKSFKLYLGSFAQSKFDSVDAVRDVLKRDVSAACGASVSVQLVSPHDFGKLQMEELDGLSLDRLDLDTDVYEPDPSLLSAAADEAPVEETLVSDLLRSNCPVTGQPDWGSVQIHYVGPQIDHAGLLRYIISFRNHTGFHEQCVERIFLDILQACKPLKLAVYARYTRRGGLDINPFRTNYNQSMPDNARTARQ.

80 to 82 contacts substrate; it reads VES. 82–83 is an NADPH binding site; sequence SK. The Thioimide intermediate role is filled by C181. D188 (proton donor) is an active-site residue. A substrate-binding site is contributed by 220–221; sequence HE. 249–250 contacts NADPH; sequence RG.

This sequence belongs to the GTP cyclohydrolase I family. QueF type 2 subfamily. Homodimer.

It is found in the cytoplasm. It carries out the reaction 7-aminomethyl-7-carbaguanine + 2 NADP(+) = 7-cyano-7-deazaguanine + 2 NADPH + 3 H(+). It participates in tRNA modification; tRNA-queuosine biosynthesis. Its function is as follows. Catalyzes the NADPH-dependent reduction of 7-cyano-7-deazaguanine (preQ0) to 7-aminomethyl-7-deazaguanine (preQ1). This is NADPH-dependent 7-cyano-7-deazaguanine reductase from Burkholderia vietnamiensis (strain G4 / LMG 22486) (Burkholderia cepacia (strain R1808)).